Consider the following 562-residue polypeptide: AT-rich interactive domain-containing protein 1 (562 aa).

The ARID domain occupies lysine 43–asparagine 136. Residues proline 358–methionine 448 form the ELM2 domain.

It is found in the nucleus. This chain is AT-rich interactive domain-containing protein 1 (ARID1), found in Arabidopsis thaliana (Mouse-ear cress).